We begin with the raw amino-acid sequence, 89 residues long: Large ribosomal subunit protein uL24 (89 aa).

Belongs to the universal ribosomal protein uL24 family. As to quaternary structure, part of the 50S ribosomal subunit.

Its function is as follows. One of two assembly initiator proteins, it binds directly to the 5'-end of the 23S rRNA, where it nucleates assembly of the 50S subunit. One of the proteins that surrounds the polypeptide exit tunnel on the outside of the subunit. The polypeptide is Large ribosomal subunit protein uL24 (Oenococcus oeni (strain ATCC BAA-331 / PSU-1)).